Consider the following 394-residue polypeptide: Quinolinate synthase (394 aa).

Residues H57 and S74 each contribute to the iminosuccinate site. C121 contributes to the [4Fe-4S] cluster binding site. Residues 153–155 (YMN) and S174 each bind iminosuccinate. C243 contributes to the [4Fe-4S] cluster binding site. Iminosuccinate-binding positions include 269–271 (HPE) and T286. C333 is a binding site for [4Fe-4S] cluster.

The protein belongs to the quinolinate synthase family. Type 3 subfamily. The cofactor is [4Fe-4S] cluster.

The protein resides in the cytoplasm. The enzyme catalyses iminosuccinate + dihydroxyacetone phosphate = quinolinate + phosphate + 2 H2O + H(+). The protein operates within cofactor biosynthesis; NAD(+) biosynthesis; quinolinate from iminoaspartate: step 1/1. Catalyzes the condensation of iminoaspartate with dihydroxyacetone phosphate to form quinolinate. The protein is Quinolinate synthase of Corynebacterium glutamicum (strain ATCC 13032 / DSM 20300 / JCM 1318 / BCRC 11384 / CCUG 27702 / LMG 3730 / NBRC 12168 / NCIMB 10025 / NRRL B-2784 / 534).